Reading from the N-terminus, the 130-residue chain is uncharacterized protein (130 aa).

Composition is skewed to polar residues over residues 1–27 (MEIL…QPSQ) and 36–46 (QAENQETAKNG). 2 disordered regions span residues 1-46 (MEIL…AKNG) and 103-130 (VSAQ…ELDL). The stretch at 27-51 (QDAHEKARQQAENQETAKNGMISQI) forms a coiled coil.

The protein belongs to the PDCD5 family.

This is an uncharacterized protein from Caenorhabditis elegans.